The sequence spans 361 residues: Alanine racemase (361 aa).

Lysine 35 (proton acceptor; specific for D-alanine) is an active-site residue. At lysine 35 the chain carries N6-(pyridoxal phosphate)lysine. Arginine 132 serves as a coordination point for substrate. Residue tyrosine 257 is the Proton acceptor; specific for L-alanine of the active site. A substrate-binding site is contributed by methionine 305.

It belongs to the alanine racemase family. Requires pyridoxal 5'-phosphate as cofactor.

The catalysed reaction is L-alanine = D-alanine. The protein operates within amino-acid biosynthesis; D-alanine biosynthesis; D-alanine from L-alanine: step 1/1. Functionally, catalyzes the interconversion of L-alanine and D-alanine. May also act on other amino acids. In Thioalkalivibrio sulfidiphilus (strain HL-EbGR7), this protein is Alanine racemase (alr).